The chain runs to 77 residues: Large ribosomal subunit protein bL28 (77 aa).

Residues 1–25 (MARVCQVTGKAPMSGNNVSHANNKT) form a disordered region.

Belongs to the bacterial ribosomal protein bL28 family.

The sequence is that of Large ribosomal subunit protein bL28 from Paraburkholderia phytofirmans (strain DSM 17436 / LMG 22146 / PsJN) (Burkholderia phytofirmans).